The primary structure comprises 314 residues: Deoxymugineic acid synthase 1-D (314 aa).

Positions 1-21 (MGAGEKTAAGMPRIGMGTAVQ) are disordered. Position 44 (Asp-44) interacts with NADP(+). Catalysis depends on Tyr-49, which acts as the Proton donor. Substrate is bound at residue His-112. NADP(+) contacts are provided by residues 158–159 (AN), Gln-180, 258–266 (FDEARMREN), and 273–281 (ELTEEERLR).

The protein belongs to the aldo/keto reductase family. As to expression, mostly expressed in root tissues, observed, at low levels, in mesocotyl and embryonic roots, seedling roots, crown and seedling leafes, mature bracts, anthers, pistil, caryopsis and embryos.

The enzyme catalyses 2'-deoxymugineate + NAD(+) = 3''-deamino-3''-oxonicotianamine + NADH + H(+). The catalysed reaction is 2'-deoxymugineate + NADP(+) = 3''-deamino-3''-oxonicotianamine + NADPH + H(+). The protein operates within siderophore biosynthesis. Its function is as follows. Catalyzes the reduction of a 3''-keto intermediate during the biosynthesis of 2'-deoxymugineic acid (DMA) from L-Met. Involved in the formation of phytosiderophores (MAs) belonging to the mugineic acid family and required to acquire iron. The protein is Deoxymugineic acid synthase 1-D of Triticum aestivum (Wheat).